A 1040-amino-acid chain; its full sequence is Eukaryotic translation initiation factor 3 subunit A (1040 aa).

Residues 92 to 121 (LKKFIELAEKKVTEAQTKADEIQSSLESAA) adopt a coiled-coil conformation. Residues 339–523 (MTKAASFVLL…GVLTFDSDVF (185 aa)) enclose the PCI domain. A coiled-coil region spans residues 608 to 906 (RVIIEKKKEA…AEARRAARKA (299 aa)). 2 stretches are compositionally biased toward basic and acidic residues: residues 617–632 (AATDALQRKQREEETR) and 795–901 (EVSE…EARR). 2 disordered regions span residues 617-641 (AATDALQRKQREEETRKRIRTQQLQ) and 795-1040 (EVSE…QQNQ). Composition is skewed to low complexity over residues 908–917 (LEPAAPAARP), 945–955 (KEAAGGAAPEA), 978–993 (SGSSAAPAAPPSNGAP), and 1004–1018 (SSSSQPPSRTQTPGS).

It belongs to the eIF-3 subunit A family. Component of the eukaryotic translation initiation factor 3 (eIF-3) complex.

It is found in the cytoplasm. Its function is as follows. RNA-binding component of the eukaryotic translation initiation factor 3 (eIF-3) complex, which is involved in protein synthesis of a specialized repertoire of mRNAs and, together with other initiation factors, stimulates binding of mRNA and methionyl-tRNAi to the 40S ribosome. The eIF-3 complex specifically targets and initiates translation of a subset of mRNAs involved in cell proliferation. The chain is Eukaryotic translation initiation factor 3 subunit A (tif32) from Aspergillus terreus (strain NIH 2624 / FGSC A1156).